Consider the following 579-residue polypeptide: Glutamine--tRNA ligase (579 aa).

Residues 41 to 51 (PEPNGYLHIGH) carry the 'HIGH' region motif. Residues 42 to 44 (EPN) and 48 to 54 (HIGHAKA) each bind ATP. 2 residues coordinate L-glutamine: Asp74 and Tyr218. ATP contacts are provided by residues Thr237, 285-286 (RL), and 293-295 (MSK). The short motif at 292–296 (VMSKR) is the 'KMSKS' region element.

It belongs to the class-I aminoacyl-tRNA synthetase family. In terms of assembly, monomer.

The protein resides in the cytoplasm. It catalyses the reaction tRNA(Gln) + L-glutamine + ATP = L-glutaminyl-tRNA(Gln) + AMP + diphosphate. The sequence is that of Glutamine--tRNA ligase from Xanthomonas euvesicatoria pv. vesicatoria (strain 85-10) (Xanthomonas campestris pv. vesicatoria).